The primary structure comprises 939 residues: Isoleucine--tRNA ligase (939 aa).

Residues P58–H68 carry the 'HIGH' region motif. An L-isoleucyl-5'-AMP-binding site is contributed by E562. Positions K603–S607 match the 'KMSKS' region motif. K606 serves as a coordination point for ATP. 4 residues coordinate Zn(2+): C903, C906, C922, and C925.

It belongs to the class-I aminoacyl-tRNA synthetase family. IleS type 1 subfamily. In terms of assembly, monomer. Zn(2+) is required as a cofactor.

It is found in the cytoplasm. The enzyme catalyses tRNA(Ile) + L-isoleucine + ATP = L-isoleucyl-tRNA(Ile) + AMP + diphosphate. Catalyzes the attachment of isoleucine to tRNA(Ile). As IleRS can inadvertently accommodate and process structurally similar amino acids such as valine, to avoid such errors it has two additional distinct tRNA(Ile)-dependent editing activities. One activity is designated as 'pretransfer' editing and involves the hydrolysis of activated Val-AMP. The other activity is designated 'posttransfer' editing and involves deacylation of mischarged Val-tRNA(Ile). The protein is Isoleucine--tRNA ligase of Buchnera aphidicola subsp. Baizongia pistaciae (strain Bp).